A 601-amino-acid polypeptide reads, in one-letter code: Glutathione-regulated potassium-efflux system protein KefB (601 aa).

13 helical membrane-spanning segments follow: residues 4-24 (SDLLTAGVMFLFAAVAAVPLA), 29-49 (IGAVLGYLLAGIAIGPWGLGF), 55-75 (EILHFSELGVVFLMFIIGLEL), 87-107 (IFGVGAAQVMLSAVVLAGLLM), 115-135 (AAVIGGIGLAMSSTAMALQLM), 152-172 (VLLFQDLAVIPALALVPLLAG), 177-197 (HFDWIKVGMKVLAFAGMLIGG), 207-227 (FIADSGVREVFTAATLLLVLG), 230-250 (LFMDALGLSMALGTFIAGVLL), 262-282 (AIDPFKGLLLGLFFISVGMSL), 284-304 (LGVLYTHLLWVAVSVIVLVAV), 324-344 (MQFAGVLSQGGEFAFVLFSTA), and 356-376 (SLLLVTVTLSMMTTPLLMKLV). The 120-residue stretch at 400–519 (KPQVIVVGFG…AGVTQFSRET (120 aa)) folds into the RCK N-terminal domain.

Belongs to the monovalent cation:proton antiporter 2 (CPA2) transporter (TC 2.A.37) family. KefB subfamily. Interacts with the regulatory subunit KefG.

The protein resides in the cell inner membrane. In terms of biological role, pore-forming subunit of a potassium efflux system that confers protection against electrophiles. Catalyzes K(+)/H(+) antiport. This chain is Glutathione-regulated potassium-efflux system protein KefB, found in Citrobacter koseri (strain ATCC BAA-895 / CDC 4225-83 / SGSC4696).